The sequence spans 144 residues: Globin (144 aa).

At A1 the chain carries N-acetylalanine. A Globin domain is found at 1–144 (ALSAADAGLL…IISALQSAGK (144 aa)). Heme b is bound at residue H95.

It belongs to the globin family. Monomer.

The protein is Globin of Aplysia juliana (Walking sea hare).